The sequence spans 345 residues: N-acetyl-gamma-glutamyl-phosphate reductase (345 aa).

Cys-149 is an active-site residue.

This sequence belongs to the NAGSA dehydrogenase family. Type 1 subfamily.

Its subcellular location is the cytoplasm. The catalysed reaction is N-acetyl-L-glutamate 5-semialdehyde + phosphate + NADP(+) = N-acetyl-L-glutamyl 5-phosphate + NADPH + H(+). It participates in amino-acid biosynthesis; L-arginine biosynthesis; N(2)-acetyl-L-ornithine from L-glutamate: step 3/4. Catalyzes the NADPH-dependent reduction of N-acetyl-5-glutamyl phosphate to yield N-acetyl-L-glutamate 5-semialdehyde. This chain is N-acetyl-gamma-glutamyl-phosphate reductase, found in Bacillus cereus (strain AH187).